Here is a 347-residue protein sequence, read N- to C-terminus: Isopentenyl-diphosphate delta-isomerase (347 aa).

Arg11 to Lys12 lines the substrate pocket. Residues Ala72–Thr74, Ser102, and Asn131 contribute to the FMN site. Substrate is bound at residue Gln161. Glu162 lines the Mg(2+) pocket. Residues Lys192, Thr222, and Ala287–Gly288 contribute to the FMN site.

Belongs to the IPP isomerase type 2 family. Homooctamer. Dimer of tetramers. Requires FMN as cofactor. The cofactor is NADPH. Mg(2+) serves as cofactor.

The protein localises to the cytoplasm. The catalysed reaction is isopentenyl diphosphate = dimethylallyl diphosphate. Functionally, involved in the biosynthesis of isoprenoids. Catalyzes the 1,3-allylic rearrangement of the homoallylic substrate isopentenyl (IPP) to its allylic isomer, dimethylallyl diphosphate (DMAPP). This is Isopentenyl-diphosphate delta-isomerase from Lactococcus lactis subsp. lactis (strain IL1403) (Streptococcus lactis).